Here is a 110-residue protein sequence, read N- to C-terminus: UPF0145 protein Blon_0093/BLIJ_0092 (110 aa).

It belongs to the UPF0145 family.

This Bifidobacterium longum subsp. infantis (strain ATCC 15697 / DSM 20088 / JCM 1222 / NCTC 11817 / S12) protein is UPF0145 protein Blon_0093/BLIJ_0092.